Reading from the N-terminus, the 1193-residue chain is MARHGDTRSPSPVGSTYSSSRRSRRDDDRYEKSRRDDGRSYRRSRSPERRYRDRDRDSYRRRDRSIDRRDDHRDEDSYRPSRRDRSRDRRRSRDRGDDRDHRRKSRERDYRSRRDDSRDRARRRTDDSADLKHKSRRDDSRTRNLDSKSRETSKPSTPAPAAPTEDEKRAERLAKLEAWKQKQAAERERKQREAAAAGGARSILEEIDRKSGLSPAVGSPQSPAATPTTDATPAPYAGKFDPKAIVRNAVPAPSTPAVLGNDVAVPQSAKASASLSSMNNHVQANKPPAAISTASSTLTVKRNVGGFGLGARQVADAEKSSAVKTLGFGEEESKRKKLERLPTPPLEDAKDDTGAVDAAVEDEDDVDMQDGGTEEENAAAARAAAERREERLQSEALRAQSKEAAPQPNGDVEMDDVSHQAESEKMEVDAAEEEVDPLDAFMSELAETAPPKKTTGARFAKAKEQQPEAMFGDEHDVDLTAVGEGDADDFLAIANKAKKKKDIPAVDHEKMEYEPFRKKFYTEPSNLAEMTDEEAASLRLELDGIKVRGVDVPKPVMKWSQCGLGVQTLDVIHRLGYENPTSIQSQAIPAIMSGRDVIGVAKTGSGKTIAFLIPMFRHIRDQRPLENMEGPIGLIMTPTRELATQIHKDCKPFLKALNLRAVCAYGGAPIKDQIAELKRGAEIVVCTPGRMIDLLAANAGRVTNLRRVTYVVLDEADRMFDMGFEPQVMKIMANIRPDRQTVLFSATFPRNMEALARKSLTKPIEIVVGGKSVVAPEITQIVEVRNEDTKFVRLLEILGNLYSDDANEDARALIFVDRQEAADTLLRELMRKGYPCMSIHGGKDQIDRDSTIEDFKAGIFPILIATSVAARGLDVKQLKLVVNYDAPNHLEDYVHRAGRTGRAGNTGTAVTFLTEEQERYSVDIAKALRQSGQKVPEPVQKMVDSFLEKVKAGKEKASASGFGGKGLERLDQERDAARMRERRTYKTGEEGEDEEDKEDKAEKADERFSKVVSSVQSAAAAATTPLPGVPKGIDLDGKITVHRTEKDPAGASKNPLDKVGSAVADIHARLSRAGVMRSGVPIDNRGPDAGAFHATLEINDFPQKARWAVTNRTNVAKILEATGTSITTKGSFYPAGKEPGPGENPKLYILVEGETELAVTNAMRELMRLLKEGTLAAADSDARAPVGGRYNVV.

Disordered stretches follow at residues 1–236 (MARH…PAPY) and 326–426 (LGFG…SEKM). Positions 8 to 20 (RSPSPVGSTYSSS) are enriched in low complexity. 3 stretches are compositionally biased toward basic and acidic residues: residues 24–87 (RRDD…DRSR), 94–153 (DRGD…RETS), and 165–193 (EDEKRAERLAKLEAWKQKQAAERERKQRE). Residues 223–235 (PAATPTTDATPAP) are compositionally biased toward low complexity. Acidic residues predominate over residues 359 to 377 (AVEDEDDVDMQDGGTEEEN). 2 stretches are compositionally biased toward basic and acidic residues: residues 384-393 (AAERREERLQ) and 416-426 (DVSHQAESEKM). The short motif at 557-585 (MKWSQCGLGVQTLDVIHRLGYENPTSIQS) is the Q motif element. The 179-residue stretch at 588–766 (IPAIMSGRDV…RKSLTKPIEI (179 aa)) folds into the Helicase ATP-binding domain. ATP is bound at residue 601–608 (AKTGSGKT). Positions 714–717 (DEAD) match the DEAD box motif. The Helicase C-terminal domain maps to 793–943 (RLLEILGNLY…KVPEPVQKMV (151 aa)). The tract at residues 957–1009 (ASASGFGGKGLERLDQERDAARMRERRTYKTGEEGEDEEDKEDKAEKADERFS) is disordered. Basic and acidic residues-rich tracts occupy residues 966-989 (GLERLDQERDAARMRERRTYKTGE) and 998-1009 (EDKAEKADERFS).

It belongs to the DEAD box helicase family. DDX46/PRP5 subfamily.

Its subcellular location is the nucleus. It catalyses the reaction ATP + H2O = ADP + phosphate + H(+). Functionally, ATP-dependent RNA helicase involved spliceosome assembly and in nuclear splicing. Catalyzes an ATP-dependent conformational change of U2 snRNP. Bridges U1 and U2 snRNPs and enables stable U2 snRNP association with intron RNA. The sequence is that of Pre-mRNA-processing ATP-dependent RNA helicase prp5 (prp5) from Neosartorya fischeri (strain ATCC 1020 / DSM 3700 / CBS 544.65 / FGSC A1164 / JCM 1740 / NRRL 181 / WB 181) (Aspergillus fischerianus).